Here is a 173-residue protein sequence, read N- to C-terminus: Large ribosomal subunit protein uL5 (173 aa).

It belongs to the universal ribosomal protein uL5 family. As to quaternary structure, part of the 50S ribosomal subunit; contacts the 5S rRNA and probably tRNA. Forms a bridge to the 30S subunit in the 70S ribosome.

Its function is as follows. This is one of the proteins that bind and probably mediate the attachment of the 5S RNA into the large ribosomal subunit, where it forms part of the central protuberance. In the 70S ribosome it contacts protein S13 of the 30S subunit (bridge B1b), connecting the 2 subunits; this bridge is implicated in subunit movement. May contact the P site tRNA; the 5S rRNA and some of its associated proteins might help stabilize positioning of ribosome-bound tRNAs. The chain is Large ribosomal subunit protein uL5 from Nitrosopumilus maritimus (strain SCM1).